Here is a 210-residue protein sequence, read N- to C-terminus: Orotate phosphoribosyltransferase (210 aa).

Residues R94, K98, H100, and 120-128 (EDLISTGGS) contribute to the 5-phospho-alpha-D-ribose 1-diphosphate site. S124 serves as a coordination point for orotate.

It belongs to the purine/pyrimidine phosphoribosyltransferase family. PyrE subfamily. In terms of assembly, homodimer. The cofactor is Mg(2+).

It carries out the reaction orotidine 5'-phosphate + diphosphate = orotate + 5-phospho-alpha-D-ribose 1-diphosphate. It functions in the pathway pyrimidine metabolism; UMP biosynthesis via de novo pathway; UMP from orotate: step 1/2. Its function is as follows. Catalyzes the transfer of a ribosyl phosphate group from 5-phosphoribose 1-diphosphate to orotate, leading to the formation of orotidine monophosphate (OMP). This chain is Orotate phosphoribosyltransferase, found in Bacillus cereus (strain ATCC 10987 / NRS 248).